Consider the following 797-residue polypeptide: Inulosucrase (797 aa).

The N-terminal stretch at 1 to 36 (MLENKNHKKISLSGKSLLMGTLSTAAIVLSASTANA) is a signal peptide. Positions 54-64 (ASSVNNENNKQ) are enriched in polar residues. Residues 54–176 (ASSVNNENNK…SVKPAENATK (123 aa)) are disordered. Composition is skewed to basic and acidic residues over residues 65 to 75 (VTEKDSADKST) and 82 to 95 (ANTK…ETTE). A compositionally biased stretch (low complexity) spans 130–139 (DQKTTNAATT). Residues 140–167 (DTKKDDVKQVEKKDSVDKTNAEENKDSS) are compositionally biased toward basic and acidic residues. Tryptophan 271 contacts substrate. Aspartate 272 acts as the Nucleophile in catalysis. Asparagine 317 is a Ca(2+) binding site. Serine 340 is a substrate binding site. Aspartate 419 lines the Ca(2+) pocket. 424–425 (RD) is a binding site for substrate. Residues glutamine 450, tryptophan 487, asparagine 489, and aspartate 521 each contribute to the Ca(2+) site. Substrate is bound by residues 522-524 (EIE) and arginine 542. Glutamate 524 functions as the Proton donor/acceptor in the catalytic mechanism. Ca(2+) contacts are provided by aspartate 660, isoleucine 662, and serine 667. The tract at residues 708–766 (QPVTPIPNVPTTPETPTTPDKPEVPTTPEVPTTPETPTPEAPKNPVKKTSQSKLPKAGD) is disordered. The span at 718–740 (TTPETPTTPDKPEVPTTPEVPTT) shows a compositional bias: low complexity. The short motif at 761–765 (LPKAG) is the LPXTG sorting signal element. Alanine 764 carries the post-translational modification Pentaglycyl murein peptidoglycan amidated alanine. The propeptide at 765-797 (GDKNSFAAVVLGAVSSILGAVGLTGVSKRKRNN) is removed by sortase.

Belongs to the glycosyl hydrolase 68 family. The cofactor is Ca(2+).

The protein resides in the secreted. It is found in the cell wall. It catalyses the reaction [(2-&gt;1)-beta-D-fructosyl](n) + sucrose = [(2-&gt;1)-beta-D-fructosyl](n+1) + D-glucose. Its function is as follows. Fructosyltransferase that catalyzes the polymerization of the fructose moiety of sucrose to produce inulin polymer and inulin oligosaccharides such as 1-kestose and nystose. This chain is Inulosucrase, found in Lactobacillus johnsonii (strain CNCM I-12250 / La1 / NCC 533).